The primary structure comprises 698 residues: Protein arginine N-methyltransferase 7 (698 aa).

SAM-dependent MTase PRMT-type domains are found at residues 14–357 (QNTW…YSLW) and 366–698 (EKPA…EKSE).

Belongs to the class I-like SAM-binding methyltransferase superfamily. Protein arginine N-methyltransferase family. PRMT7 subfamily.

Its function is as follows. Essential arginine methyltransferase that can both catalyze the formation of omega-N monomethylarginine (MMA) and symmetrical dimethylarginine (sDMA). Specifically mediates the symmetrical dimethylation of arginine residues in the small nuclear ribonucleoproteins SmD1 and SmD3. The chain is Protein arginine N-methyltransferase 7 (Art7) from Drosophila mojavensis (Fruit fly).